Reading from the N-terminus, the 99-residue chain is Integration host factor subunit alpha (99 aa).

Belongs to the bacterial histone-like protein family. In terms of assembly, heterodimer of an alpha and a beta chain.

This protein is one of the two subunits of integration host factor, a specific DNA-binding protein that functions in genetic recombination as well as in transcriptional and translational control. This is Integration host factor subunit alpha from Stenotrophomonas maltophilia (strain R551-3).